The primary structure comprises 359 residues: Phosphate acyltransferase (359 aa).

Positions A337–A359 are disordered.

This sequence belongs to the PlsX family. As to quaternary structure, homodimer. Probably interacts with PlsY.

It localises to the cytoplasm. The catalysed reaction is a fatty acyl-[ACP] + phosphate = an acyl phosphate + holo-[ACP]. It participates in lipid metabolism; phospholipid metabolism. Its function is as follows. Catalyzes the reversible formation of acyl-phosphate (acyl-PO(4)) from acyl-[acyl-carrier-protein] (acyl-ACP). This enzyme utilizes acyl-ACP as fatty acyl donor, but not acyl-CoA. The protein is Phosphate acyltransferase of Cupriavidus necator (strain ATCC 17699 / DSM 428 / KCTC 22496 / NCIMB 10442 / H16 / Stanier 337) (Ralstonia eutropha).